We begin with the raw amino-acid sequence, 82 residues long: uncharacterized protein (82 aa).

This is an uncharacterized protein from Autographa californica nuclear polyhedrosis virus (AcMNPV).